Here is a 429-residue protein sequence, read N- to C-terminus: Arrestin-related trafficking adapter 10 (429 aa).

This sequence belongs to the ART10 family.

The protein resides in the cytoplasm. Its function is as follows. May regulate endocytosis by recruiting RSP5 ubiquitin ligase activity to specific plasma membrane proteins in response to extracellular stimuli. This Lachancea thermotolerans (strain ATCC 56472 / CBS 6340 / NRRL Y-8284) (Yeast) protein is Arrestin-related trafficking adapter 10 (ART10).